Consider the following 27-residue polypeptide: Delta-actitoxin-Avd2a (27 aa).

Intrachain disulfides connect C3-C17, C4-C11, and C6-C22.

The protein belongs to the sea anemone short toxin (type III) family.

The protein localises to the secreted. It localises to the nematocyst. Its function is as follows. Specific arthropod (crab and insect) toxin that inhibits inactivation of voltage-gated sodium channels. It competes well with the site-3 toxin LqhalphaIT (from the scorpion L.quinquestriatus (AC P17728)) on binding to cockroach neuronal membranes (Ki=21.4 nM), and inhibits the inactivation of D.melanogaster channel (DmNav1), but not that of mammalian Navs expressed in Xenopus oocytes. Its activity is synergically enhanced by ligands of receptor site-4 (Bj-xtrIT (AC P56637)). Its ability to inhibit the channel mutant DmNav1[D1701R] only decreases 5-fold, whereas the inhibition activity is completely lost by LqhalphaIT and Av2 when tested on DmNav1[D1701R]. The polypeptide is Delta-actitoxin-Avd2a (Anemonia sulcata (Mediterranean snakelocks sea anemone)).